Reading from the N-terminus, the 244-residue chain is MRTRYLIGNWKTNKNLKDAVSFVEQFQQNKLNYNAKIGIAPVYVHLTEIKKIISDSLLLFAQDANFIESGSYTGTVSFTQLQDIGVNNSIIGHSERRKYYNETSAVINQKLFACLKASMQVVLCIGEALGQEISFLKTDLTNCLDTIDKSLIKNLVIAYEPLWAIGTGKTATPEVANQTIKTIREYINDLYDENVANNISILYGGSVDHNNIQKLAIMEQIDGFLVGKASLEIKNFLEMARVYA.

9–11 serves as a coordination point for substrate; the sequence is NWK. The active-site Electrophile is the His93. Glu160 (proton acceptor) is an active-site residue. Residues Gly166 and Ser206 each coordinate substrate.

It belongs to the triosephosphate isomerase family. Homodimer.

The protein localises to the cytoplasm. The catalysed reaction is D-glyceraldehyde 3-phosphate = dihydroxyacetone phosphate. The protein operates within carbohydrate biosynthesis; gluconeogenesis. Its pathway is carbohydrate degradation; glycolysis; D-glyceraldehyde 3-phosphate from glycerone phosphate: step 1/1. Functionally, involved in the gluconeogenesis. Catalyzes stereospecifically the conversion of dihydroxyacetone phosphate (DHAP) to D-glyceraldehyde-3-phosphate (G3P). This is Triosephosphate isomerase from Mycoplasma genitalium (strain ATCC 33530 / DSM 19775 / NCTC 10195 / G37) (Mycoplasmoides genitalium).